A 561-amino-acid polypeptide reads, in one-letter code: uncharacterized protein (561 aa).

Disordered regions lie at residues 369–390 (SVPE…LSKG) and 429–515 (EGLG…GESE). Residue serine 383 is modified to Phosphoserine. Positions 465 to 503 (NISPESSRFGTPSDPNSSSQSLGNEVLSRPNSNSNSAES) are enriched in polar residues.

This is an uncharacterized protein from Schizosaccharomyces pombe (strain 972 / ATCC 24843) (Fission yeast).